The sequence spans 448 residues: MAHVGDCKWMSWLPVLVVSLMCSAKAEDSNCGENEYHNQTTGLCQQCPPCRPGEEPYMSCGYGTKDDDYGCVPCPAEKFSKGGYQICRRHKDCEGFFRATVLTPGDMENDAECGPCLPGYYMLENRPRNIYGMVCYSCLLAPPNTKECVGATSGVSAHSSSTSGGSTLSPFQHAHKELSGQGHLATALIIAMSTIFIMAIAIVLIIMFYIMKTKPSAPACCSSPPGKSAEAPANTHEEKKEAPDSVVTFPENGEFQKLTATPTKTPKSENDASSENEQLLSRSVDSDEEPAPDKQGSPELCLLSLVHLAREKSVTSNKSAGIQSRRKKILDVYANVCGVVEGLSPTELPFDCLEKTSRMLSSTYNSEKAVVKTWRHLAESFGLKRDEIGGMTDGMQLFDRISTAGYSIPELLTKLVQIERLDAVESLCADILEWAGVVPPASPPPAAS.

The first 26 residues, 1–26, serve as a signal peptide directing secretion; sequence MAHVGDCKWMSWLPVLVVSLMCSAKA. Topologically, residues 27–187 are extracellular; the sequence is EDSNCGENEY…LSGQGHLATA (161 aa). TNFR-Cys repeat units lie at residues 30–71, 73–113, and 115–150; these read NCGE…DYGC, PCPA…DAEC, and PCLPGYYMLENRPRNIYGMVCYSCLLAPPNTKECVG. 6 disulfides stabilise this stretch: Cys-31-Cys-44, Cys-47-Cys-60, Cys-50-Cys-71, Cys-74-Cys-87, Cys-93-Cys-113, and Cys-135-Cys-148. A glycan (N-linked (GlcNAc...) asparagine) is linked at Asn-38. The chain crosses the membrane as a helical span at residues 188–208; the sequence is LIIAMSTIFIMAIAIVLIIMF. The Cytoplasmic segment spans residues 209-448; that stretch reads YIMKTKPSAP…PPASPPPAAS (240 aa). The span at 220-229 shows a compositional bias: low complexity; that stretch reads CCSSPPGKSA. Residues 220 to 297 form a disordered region; it reads CCSSPPGKSA…EEPAPDKQGS (78 aa). Residues 258–283 show a composition bias toward polar residues; that stretch reads LTATPTKTPKSENDASSENEQLLSRS. Residues 358 to 431 form the Death domain; the sequence is RMLSSTYNSE…DAVESLCADI (74 aa).

Binds to EDARADD. Associates with TRAF1, TRAF2, TRAF3 and NIK.

It is found in the membrane. Functionally, receptor for EDA isoform TAA, but not for EDA isoform TA-2. May mediate the activation of NF-kappa-B and JNK. May promote caspase-independent cell death. The polypeptide is Tumor necrosis factor receptor superfamily member EDAR (Edar) (Mus musculus (Mouse)).